We begin with the raw amino-acid sequence, 117 residues long: Toxin CSTX-8 (117 aa).

A signal peptide spans 1–20 (MKVLVICAVLFLAIFSNSSA). Residues 21 to 47 (ETEDDFLEDESFQADDVIPFLASEQVR) constitute a propeptide that is removed on maturation. Disulfide bonds link C50/C65, C57/C74, C64/C95, and C76/C93. A propeptide spanning residues 82 to 87 (RSETDR) is cleaved from the precursor. T116 is modified (threonine amide).

The protein belongs to the neurotoxin 19 (CSTX) family. 12 subfamily. As to quaternary structure, heterodimer of A and B chains; disulfide-linked. Interacts with CSTX-1 (AC P81694), and with CSTX-9 (AC P58604). Expressed by the venom gland.

The protein localises to the secreted. Its subcellular location is the target cell membrane. Its function is as follows. Synergistic toxin that induces or increases a cytolytic effect when combined with CSTX-1 (AC P81694) or CSTX-9 (AC P58604). When alone, has a weak insecticidal activity, with an unknown molecular target. This chain is Toxin CSTX-8, found in Cupiennius salei (American wandering spider).